Consider the following 30-residue polypeptide: Thermophilic aminopeptidase 1 alpha chain (30 aa).

This sequence belongs to the peptidase M42 family. In terms of assembly, 12 chains of two different but homologous types, alpha and beta, which can combine in various ratios. A divalent metal cation serves as cofactor.

Metalloenzyme of broad specificity, releasing all N-terminal amino acids. The chain is Thermophilic aminopeptidase 1 alpha chain from Geobacillus stearothermophilus (Bacillus stearothermophilus).